The following is a 251-amino-acid chain: Putative glutamine amidotransferase YLR126C (251 aa).

The 185-residue stretch at 48–232 (EVFHVQKNVF…NRYERQCQEL (185 aa)) folds into the Glutamine amidotransferase type-1 domain. Residues Cys112, His198, and Glu200 each act as for GATase activity in the active site.

Its subcellular location is the cytoplasm. May have a role in copper and iron homeostasis. The sequence is that of Putative glutamine amidotransferase YLR126C from Saccharomyces cerevisiae (strain ATCC 204508 / S288c) (Baker's yeast).